A 678-amino-acid polypeptide reads, in one-letter code: Transcriptional regulator CRZ1 (678 aa).

Over residues 1-21 (MSFSNGNMASYMTSSNGEEQS) the composition is skewed to polar residues. Disordered stretches follow at residues 1–50 (MSFS…SHTF) and 159–195 (TPADNQHRPSLTNQFLSPRSNYDGTTRSSGIDSNYSD). Positions 34–47 (YRRNNFRNSSNSGS) are enriched in low complexity. Polar residues predominate over residues 166 to 195 (RPSLTNQFLSPRSNYDGTTRSSGIDSNYSD). Phosphothreonine is present on T170. S175, S245, and S385 each carry phosphoserine. The segment at 401-486 (KLKKSRRRSS…SNFNEDNNNN (86 aa)) is disordered. The segment covering 410 to 428 (SQTSNNSFTSRRSSRSRSI) has biased composition (low complexity). 2 stretches are compositionally biased toward basic and acidic residues: residues 429-446 (SPDEKAKSISANREKLLE) and 457-467 (DNNRERYDNDS). The span at 472–486 (NTINSSNFNEDNNNN) shows a compositional bias: low complexity. C2H2-type zinc fingers lie at residues 569-591 (FACDVCGKKFTRPYNLKSHLRTH) and 597-619 (FICSICGKAFARQHDRKRHEDLH).

Post-translationally, phosphorylated. Dephosphorylated by calcineurin which leads to rapid translocation from the cytoplasm to the nucleus. Phosphorylated by the cyclin-CDK PHO80-PHO85.

It is found in the nucleus. Its subcellular location is the cytoplasm. In terms of biological role, involved in the regulation of calcium ion homeostasis. Binds to the calcineurin-dependent response element. Transcriptionally regulates PMC1, PMR1, PMR2A and FKS2. The protein is Transcriptional regulator CRZ1 (CRZ1) of Saccharomyces cerevisiae (strain ATCC 204508 / S288c) (Baker's yeast).